Reading from the N-terminus, the 255-residue chain is Adenosine 5'-phosphosulfate reductase (255 aa).

Residues 1 to 39 (MMTAEVRTPEQGGGPLTTEPRAPRSAPGHADASAPAFGP) are disordered. [4Fe-4S] cluster is bound by residues Cys-137, Cys-138, Cys-220, and Cys-223. Residue Cys-246 is the Nucleophile; cysteine thiosulfonate intermediate of the active site.

It belongs to the PAPS reductase family. CysH subfamily. It depends on [4Fe-4S] cluster as a cofactor.

The protein resides in the cytoplasm. The enzyme catalyses [thioredoxin]-disulfide + sulfite + AMP + 2 H(+) = adenosine 5'-phosphosulfate + [thioredoxin]-dithiol. It functions in the pathway sulfur metabolism; hydrogen sulfide biosynthesis; sulfite from sulfate. In terms of biological role, catalyzes the formation of sulfite from adenosine 5'-phosphosulfate (APS) using thioredoxin as an electron donor. This chain is Adenosine 5'-phosphosulfate reductase, found in Deinococcus radiodurans (strain ATCC 13939 / DSM 20539 / JCM 16871 / CCUG 27074 / LMG 4051 / NBRC 15346 / NCIMB 9279 / VKM B-1422 / R1).